Reading from the N-terminus, the 177-residue chain is MELNVFAGQEKSELSMIEVARAILEERGRDNEMYFNDLVNEIQNYLEKSNSEIRAALPTFYSDLNVDGSFIPLGENKWGLRSWYAIDEIDEEVITLEEDDEDAPKRKKKRVNAFMDGDDDAIDYGHDDPEDEDNYPGSVSSEYDDENPDDEKDEVESYDQKSTKLSQMTNWMKRMLI.

The HTH HARE-type domain occupies L14–W83. 2 stretches are compositionally biased toward acidic residues: residues G117–N134 and E142–S157. The segment at G117–K164 is disordered.

It belongs to the RpoE family. RNAP is composed of a core of 2 alpha, a beta and a beta' subunits. The core is associated with a delta subunit and one of several sigma factors.

Participates in both the initiation and recycling phases of transcription. In the presence of the delta subunit, RNAP displays an increased specificity of transcription, a decreased affinity for nucleic acids, and an increased efficiency of RNA synthesis because of enhanced recycling. This Streptococcus suis (strain 98HAH33) protein is Probable DNA-directed RNA polymerase subunit delta.